The following is an 81-amino-acid chain: uncharacterized protein (81 aa).

The N-terminal stretch at 1-31 (MRYNSFLSVLALFNVLLWFTFILAISMTFSA) is a signal peptide. A helical transmembrane segment spans residues 52-74 (WFFVLLPYVIGLFFAIFDSATIG).

It localises to the membrane. This is an uncharacterized protein from Pasteurella multocida (strain Pm70).